We begin with the raw amino-acid sequence, 217 residues long: Ras-related protein Rab-39A (217 aa).

Positions 17, 20, 21, 22, 23, and 44 each coordinate GTP. A Mg(2+)-binding site is contributed by S22. Residues 39 to 47 are switch-I; sequence PACDPTVGV. T44 and D68 together coordinate Mg(2+). Residues G71, H127, K128, D130, A158, and K159 each coordinate GTP. A switch-II region spans residues 71–87; that stretch reads GQERFRSITRSYYRNSV. Residues C215 and C217 are each lipidated (S-geranylgeranyl cysteine). A Cysteine methyl ester modification is found at C217.

This sequence belongs to the small GTPase superfamily. Rab family. As to quaternary structure, interacts (GDP-bound) with C9orf72; C9orf72 acts as a GEF for RAB39A. Interacts (GTP-bound) with HOPS complex components VPS39 and VPS41, and STX17; interaction between HOPS components and RAB39A contributes to obtaining a functional HOPS complex that promotes membrane fusion driven by STX17-SNAP29-VAMP8. Interacts with BECN1. Probably associates with the PI3K (PI3KC3/PI3K-III/class III phosphatidylinositol 3-kinase) complex. Interacts with UACA. Interacts with isoform a of RASSF1. Does not interact with isoform c of RASSF1. Mg(2+) serves as cofactor. Post-translationally, prenylated. Prenylation is required for association with cellular membranes.

It is found in the cell membrane. Its subcellular location is the cytoplasmic vesicle. The protein resides in the phagosome membrane. The protein localises to the lysosome membrane. It localises to the autolysosome membrane. The enzyme catalyses GTP + H2O = GDP + phosphate + H(+). Its activity is regulated as follows. Regulated by guanine nucleotide exchange factors (GEFs) including c9Orf72, which promote the exchange of bound GDP for free GTP. Regulated by GTPase activating proteins (GAPs) which increase the GTP hydrolysis activity. Inhibited by GDP dissociation inhibitors (GDIs). Functionally, the small GTPases Rab are key regulators of intracellular membrane trafficking, from the formation of transport vesicles to their fusion with membranes. Rabs cycle between an inactive GDP-bound form and an active GTP-bound form that is able to recruit to membranes different sets of downstream effectors directly responsible for vesicle formation, movement, tethering and fusion. RAB39A regulates autophagosome-lysosome fusion via recruitment of the HOPS endosomal tethering complex onto lysosomes; this process involves lysosomal RAB39A and autophagosomal RAB2A recruitment of HOPS subcomplexes VPS41-VPS16-VPS18-VPS33A and VPS39-VPS11, respectively, which assemble into a functional complex to mediate membrane tethering and SNAREs-driven membrane fusion. Also negatively regulates lipopolysaccharide (LPS)-induced autophagosome formation in macrophages, possibly by implicating PI3K. Promotes the delivery of MHC-I molecules from the ER to phagosomes and the generation of peptide-loaded MHC-I complexes in phagosomes, thus enhancing antigen cross-presentation by dendritic cells. Plays a role in the maturation and acidification of phagosomes that engulf pathogens, such as S.aureus and M.tuberculosis. Plays a role in the fusion of phagosomes with lysosomes. May be involved in multiple neurite formation. This chain is Ras-related protein Rab-39A, found in Homo sapiens (Human).